The chain runs to 353 residues: Glycerol-3-phosphate dehydrogenase [NAD(P)+] (353 aa).

NADPH-binding residues include W11, R40, and K115. Sn-glycerol 3-phosphate-binding residues include K115, G156, and S158. NADPH is bound at residue A160. Sn-glycerol 3-phosphate contacts are provided by K211, D264, S274, R275, and N276. The active-site Proton acceptor is K211. R275 contacts NADPH. V299 and E301 together coordinate NADPH.

This sequence belongs to the NAD-dependent glycerol-3-phosphate dehydrogenase family.

The protein resides in the cytoplasm. It catalyses the reaction sn-glycerol 3-phosphate + NAD(+) = dihydroxyacetone phosphate + NADH + H(+). The catalysed reaction is sn-glycerol 3-phosphate + NADP(+) = dihydroxyacetone phosphate + NADPH + H(+). It participates in membrane lipid metabolism; glycerophospholipid metabolism. Catalyzes the reduction of the glycolytic intermediate dihydroxyacetone phosphate (DHAP) to sn-glycerol 3-phosphate (G3P), the key precursor for phospholipid synthesis. This is Glycerol-3-phosphate dehydrogenase [NAD(P)+] from Polaromonas sp. (strain JS666 / ATCC BAA-500).